A 200-amino-acid polypeptide reads, in one-letter code: uncharacterized protein (200 aa).

This is an uncharacterized protein from Haemophilus phage HP1 (strain HP1c1) (Bacteriophage HP1).